The primary structure comprises 140 residues: Bacilliredoxin STH2395 (140 aa).

Belongs to the bacilliredoxin family.

The polypeptide is Bacilliredoxin STH2395 (Symbiobacterium thermophilum (strain DSM 24528 / JCM 14929 / IAM 14863 / T)).